The chain runs to 92 residues: Large ribosomal subunit protein eL43 (92 aa).

Zn(2+)-binding residues include Cys39, Cys42, Cys57, and Cys60.

The protein belongs to the eukaryotic ribosomal protein eL43 family. In terms of assembly, component of the large ribosomal subunit. Mature ribosomes consist of a small (40S) and a large (60S) subunit. The 40S subunit contains 32 different proteins and 1 molecule of RNA (18S). The 60S subunit contains 45 different proteins and 3 molecules of RNA (25S, 5.8S and 5S). The cofactor is Zn(2+).

The protein localises to the cytoplasm. Functionally, component of the ribosome, a large ribonucleoprotein complex responsible for the synthesis of proteins in the cell. The small ribosomal subunit (SSU) binds messenger RNAs (mRNAs) and translates the encoded message by selecting cognate aminoacyl-transfer RNA (tRNA) molecules. The large subunit (LSU) contains the ribosomal catalytic site termed the peptidyl transferase center (PTC), which catalyzes the formation of peptide bonds, thereby polymerizing the amino acids delivered by tRNAs into a polypeptide chain. The nascent polypeptides leave the ribosome through a tunnel in the LSU and interact with protein factors that function in enzymatic processing, targeting, and the membrane insertion of nascent chains at the exit of the ribosomal tunnel. The sequence is that of Large ribosomal subunit protein eL43 from Candida albicans (strain SC5314 / ATCC MYA-2876) (Yeast).